Consider the following 700-residue polypeptide: Leucine zipper putative tumor suppressor 3 (700 aa).

4 disordered regions span residues 1–20 (MAPA…PAPH), 40–121 (RADP…SEDK), 133–188 (LRGS…SEPL), and 202–344 (FHSM…PPSP). Positions 109-121 (NRERPGRYPSEDK) are enriched in basic and acidic residues. Residues 203 to 216 (HSMQNLCPPQTNGT) are compositionally biased toward polar residues. Low complexity-rich tracts occupy residues 248–265 (DSGR…SSYS) and 301–321 (GTSD…MGRS). The segment covering 322 to 333 (GHLGSGEGGNGG) has biased composition (gly residues). Serine 343 and serine 345 each carry phosphoserine. Coiled-coil stretches lie at residues 345 to 523 (SALI…SLRD) and 597 to 666 (TRAL…RLRE). The disordered stretch occupies residues 662-700 (RRLRERGAAGGSSTPTPQHGEEKKAWTPSRLERIESTEI). Residues 680–700 (HGEEKKAWTPSRLERIESTEI) show a composition bias toward basic and acidic residues.

The protein belongs to the LZTS3 family. As to quaternary structure, interacts (via C-terminus) with SHANK3 (via PDZ domain). Interacts (via coiled coil) with SIPA1L1. Can form homooligomers.

Its subcellular location is the synapse. It localises to the postsynaptic density. The protein localises to the cell projection. The protein resides in the dendritic spine. It is found in the dendrite. Its subcellular location is the cytoplasm. It localises to the cytoskeleton. May be involved in promoting the maturation of dendritic spines, probably via regulating SIPA1L1 levels at the postsynaptic density of synapses. This is Leucine zipper putative tumor suppressor 3 from Mus musculus (Mouse).